The sequence spans 522 residues: Monogalactosyldiacylglycerol synthase, chloroplastic (522 aa).

A chloroplast-targeting transit peptide spans 1-98 (MSHPSTVTSE…RIPLGFSSIG (98 aa)).

Belongs to the glycosyltransferase 28 family. In terms of assembly, homodimer. Requires Zn(2+) as cofactor.

Its subcellular location is the plastid. The protein resides in the chloroplast inner membrane. It carries out the reaction a 1,2-diacyl-sn-glycerol + UDP-alpha-D-galactose = a 1,2-diacyl-3-O-(beta-D-galactosyl)-sn-glycerol + UDP + H(+). Its activity is regulated as follows. Inhibited by ortho-phenanthroline and UDP (competitive inhibitor relatively to UDP-Gal only) and inactivated by citraconic anhydride, tert-butoxycarbonyl-L-methionine hydrosuccinimidyl ester (SLR) and N-ethylmaleimide (NEM). Involved in the synthesis of the major structural component of photosynthetic membranes. The 1,2-diacylglycerol substrate preference is 18:2/18:2 &gt; 18:0/18:1 &gt; 18:1/18:1 &gt; 18:1/16:0 &gt; 16:0/18:2 &gt; 18:3/18:3 &gt; 16:0/18:1 &gt; 16:0/16:0 &gt; 18:0/18:0. The chain is Monogalactosyldiacylglycerol synthase, chloroplastic (MGD A) from Spinacia oleracea (Spinach).